Consider the following 567-residue polypeptide: MSVKIDKRAYAEMFGPTVGDRMRLADTELWLEVEKDYTIYGEEVKFGGGKVIRDGMGQGQGVASEVADTVITNALIVDHWGIVKADIGIKGGYISAIGKAGNPDIQPGVEIAIGAGTEVIAGEGMIVTAGGIDTHIHFICPQQIEEALMSGVTTMIGGGTGPATGTFATTCTPGPWHIHRMLQSADAFPMNLGFLGKGNASLPQPLREQVEAGVVGLKLHEDWGTTPAAIDNCLSIAEEMDVQVAIHSDTLNESGFVETTLGAFKGRTIHTFHTEGAGGGHAPDIIRAAGYPNVLPSSTNPTRPFTINTIDEHLDMLMVCHHLDPAIAEDVAFAESRIRRETIAAEDILHDLGAFAMMSSDSQAMGRVGEVVIRTWQTAHKMKVQRGPLPEDSARNDNFRIKRYIAKYTINPALTHGIAHVVGSIEVGKLADLVLWRPAFFGVKPSTILKGGMIAAAVMGDANASIPTPQPVHYRSMFGSYGGALQTSVTFVSQAALQNPEVAALQLKKPLVAVKGTRGVKKADMVHNGWMPEIDVDPETYEVRADGMVLSCEPAEILPLAQRYFLF.

In terms of domain architecture, Urease spans 130-567 (GGIDTHIHFI…LPLAQRYFLF (438 aa)). His135, His137, and Lys218 together coordinate Ni(2+). Lys218 is subject to N6-carboxylysine. A substrate-binding site is contributed by His220. 2 residues coordinate Ni(2+): His247 and His273. His321 acts as the Proton donor in catalysis. Asp361 provides a ligand contact to Ni(2+).

The protein belongs to the metallo-dependent hydrolases superfamily. Urease alpha subunit family. In terms of assembly, heterotrimer of UreA (gamma), UreB (beta) and UreC (alpha) subunits. Three heterotrimers associate to form the active enzyme. The cofactor is Ni cation. Post-translationally, carboxylation allows a single lysine to coordinate two nickel ions.

Its subcellular location is the cytoplasm. It carries out the reaction urea + 2 H2O + H(+) = hydrogencarbonate + 2 NH4(+). It functions in the pathway nitrogen metabolism; urea degradation; CO(2) and NH(3) from urea (urease route): step 1/1. This chain is Urease subunit alpha, found in Methylobacillus flagellatus (strain ATCC 51484 / DSM 6875 / VKM B-1610 / KT).